Reading from the N-terminus, the 611-residue chain is Procollagen galactosyltransferase 1-B (611 aa).

Positions 1-24 are cleaved as a signal peptide; sequence MSQAGVERLLKGLQILVLVLRLSA. Residues Asn85, Asn173, Asn370, Asn373, and Asn568 are each glycosylated (N-linked (GlcNAc...) asparagine). A compositionally biased stretch (basic and acidic residues) spans 576–591; that stretch reads DRAKSRKTHQQEKLRS. Positions 576 to 611 are disordered; the sequence is DRAKSRKTHQQEKLRSEALNTPSMGSPFDNTARDEL. The short motif at 608-611 is the Prevents secretion from ER element; the sequence is RDEL.

Belongs to the glycosyltransferase 25 family.

It is found in the endoplasmic reticulum lumen. It catalyses the reaction (5R)-5-hydroxy-L-lysyl-[collagen] + UDP-alpha-D-galactose = (5R)-5-O-(beta-D-galactosyl)-5-hydroxy-L-lysyl-[collagen] + UDP + H(+). Functionally, beta-galactosyltransferase that transfers beta-galactose to hydroxylysine residues of type I collagen. By acting on collagen glycosylation, facilitates the formation of collagen triple helix. This Xenopus laevis (African clawed frog) protein is Procollagen galactosyltransferase 1-B (colgalt1-b).